The primary structure comprises 37 residues: Protease 2 large chain (37 aa).

Over residues 1 to 14 the composition is skewed to basic and acidic residues; it reads NDGNGRDSDPHDPG. Residues 1–37 are disordered; sequence NDGNGRDSDPHDPGDWTTAGQCGLWQPARNSQHWTLV. Residues 28-37 are compositionally biased toward polar residues; the sequence is ARNSQHWTLV.

The protein belongs to the peptidase S8 family. In terms of assembly, heterodimer of a large and a small chain.

Its subcellular location is the secreted. The chain is Protease 2 large chain from Achromobacter lyticus.